We begin with the raw amino-acid sequence, 318 residues long: GTP 3',8-cyclase (318 aa).

Positions 5–217 (KFERKIDYIR…DKIAKKYKFK (213 aa)) constitute a Radical SAM core domain. Arg-14 provides a ligand contact to GTP. [4Fe-4S] cluster contacts are provided by Cys-21 and Cys-25. Tyr-27 is a binding site for S-adenosyl-L-methionine. Cys-28 lines the [4Fe-4S] cluster pocket. Arg-64 contacts GTP. Gly-68 serves as a coordination point for S-adenosyl-L-methionine. Thr-95 is a binding site for GTP. Ser-119 is an S-adenosyl-L-methionine binding site. GTP is bound at residue Lys-155. Position 189 (Met-189) interacts with S-adenosyl-L-methionine. [4Fe-4S] cluster-binding residues include Cys-248 and Cys-251. GTP is bound at residue 253–255 (RIR). Cys-265 lines the [4Fe-4S] cluster pocket.

This sequence belongs to the radical SAM superfamily. MoaA family. As to quaternary structure, monomer and homodimer. The cofactor is [4Fe-4S] cluster.

The catalysed reaction is GTP + AH2 + S-adenosyl-L-methionine = (8S)-3',8-cyclo-7,8-dihydroguanosine 5'-triphosphate + 5'-deoxyadenosine + L-methionine + A + H(+). The protein operates within cofactor biosynthesis; molybdopterin biosynthesis. In terms of biological role, catalyzes the cyclization of GTP to (8S)-3',8-cyclo-7,8-dihydroguanosine 5'-triphosphate. The polypeptide is GTP 3',8-cyclase (Nautilia profundicola (strain ATCC BAA-1463 / DSM 18972 / AmH)).